The following is a 233-amino-acid chain: 5'-methylthioadenosine/S-adenosylhomocysteine nucleosidase (233 aa).

E12 serves as the catalytic Proton acceptor. Substrate contacts are provided by residues G78, I156, and 177–178 (ME). The active-site Proton donor is D201.

The protein belongs to the PNP/UDP phosphorylase family. MtnN subfamily.

It catalyses the reaction S-adenosyl-L-homocysteine + H2O = S-(5-deoxy-D-ribos-5-yl)-L-homocysteine + adenine. It carries out the reaction S-methyl-5'-thioadenosine + H2O = 5-(methylsulfanyl)-D-ribose + adenine. The catalysed reaction is 5'-deoxyadenosine + H2O = 5-deoxy-D-ribose + adenine. Its pathway is amino-acid biosynthesis; L-methionine biosynthesis via salvage pathway; S-methyl-5-thio-alpha-D-ribose 1-phosphate from S-methyl-5'-thioadenosine (hydrolase route): step 1/2. Catalyzes the irreversible cleavage of the glycosidic bond in both 5'-methylthioadenosine (MTA) and S-adenosylhomocysteine (SAH/AdoHcy) to adenine and the corresponding thioribose, 5'-methylthioribose and S-ribosylhomocysteine, respectively. Also cleaves 5'-deoxyadenosine, a toxic by-product of radical S-adenosylmethionine (SAM) enzymes, into 5-deoxyribose and adenine. The protein is 5'-methylthioadenosine/S-adenosylhomocysteine nucleosidase of Listeria monocytogenes serotype 4a (strain HCC23).